The chain runs to 747 residues: Catalase-peroxidase 1 (747 aa).

Residues 1–22 (MTDTSDARPPHSDDKTRSHSES) show a composition bias toward basic and acidic residues. A disordered region spans residues 1–39 (MTDTSDARPPHSDDKTRSHSESENPAIDSPEPKVHAPLT). A cross-link (tryptophyl-tyrosyl-methioninium (Trp-Tyr) (with M-266)) is located at residues 112–240 (WHAAGTYRIF…FGATTMGLIY (129 aa)). Histidine 113 serves as the catalytic Proton acceptor. The segment at residues 240-266 (YVNPEGPEGKPDPLAAAHDIRETFGRM) is a cross-link (tryptophyl-tyrosyl-methioninium (Tyr-Met) (with W-112)). Histidine 281 contacts heme b.

It belongs to the peroxidase family. Peroxidase/catalase subfamily. In terms of assembly, homodimer or homotetramer. Requires heme b as cofactor. Post-translationally, formation of the three residue Trp-Tyr-Met cross-link is important for the catalase, but not the peroxidase activity of the enzyme.

It carries out the reaction H2O2 + AH2 = A + 2 H2O. It catalyses the reaction 2 H2O2 = O2 + 2 H2O. Functionally, bifunctional enzyme with both catalase and broad-spectrum peroxidase activity. This Mycolicibacterium vanbaalenii (strain DSM 7251 / JCM 13017 / BCRC 16820 / KCTC 9966 / NRRL B-24157 / PYR-1) (Mycobacterium vanbaalenii) protein is Catalase-peroxidase 1.